A 660-amino-acid polypeptide reads, in one-letter code: Potassium voltage-gated channel subfamily KQT member 1 (660 aa).

Over residues 1 to 18 the composition is skewed to polar residues; the sequence is MSSEVKSRWSGSGSQKSG. Residues 1–67 are disordered; sequence MSSEVKSRWS…PESRAADSRA (67 aa). The Cytoplasmic segment spans residues 1–113; sequence MSSEVKSRWS…YNFLERPTGW (113 aa). Basic and acidic residues predominate over residues 53–67; the sequence is STDKNPESRAADSRA. The helical transmembrane segment at 114–135 threads the bilayer; sequence KCFIYHFTVFLIVLVCLIFSVM. Residues 136 to 146 are Extracellular-facing; sequence STIEQYHYFAN. The helical transmembrane segment at 147–169 threads the bilayer; the sequence is RALVWMEIVLVVFFGTEYIVRLW. Over 170–185 the chain is Cytoplasmic; that stretch reads SAGCRSKYVGFWGRLR. A helical membrane pass occupies residues 186-211; the sequence is FARKPISIIDLIVVVASVIVLCVGSN. The Extracellular segment spans residues 212–219; the sequence is GQVFATSA. The helical; Voltage-sensor transmembrane segment at 220–235 threads the bilayer; sequence IRGIRFLQILRMLHVD. Topologically, residues 236–253 are cytoplasmic; sequence RQGGTWRLLGSVVFIHRQ. Glutamine 237 contributes to the a 1,2-diacyl-sn-glycero-3-phospho-(1D-myo-inositol-4,5-bisphosphate) binding site. The chain crosses the membrane as a helical span at residues 254–276; the sequence is ELITTLYIGFLGLIFSSYFVYLA. Residues 277–292 lie on the Extracellular side of the membrane; sequence EKDAVDDSGSQQFGSY. Positions 293-313 form an intramembrane region, pore-forming; sequence ADALWWGVVTVTTIGYGDKVP. At 314–315 the chain is on the extracellular side; the sequence is QT. The chain crosses the membrane as a helical span at residues 316–341; the sequence is WIGRTIASCFSVFAISFFALPAGILG. Over 342 to 660 the chain is Cytoplasmic; that stretch reads SGFALKVQQK…RKDQDNQPDL (319 aa). The interval 399 to 426 is disordered; it reads SPSPKTKKSVGKRKKLKTDKDNGLNSEK. Positions 403-415 are enriched in basic residues; sequence KTKKSVGKRKKLK. Positions 579 to 615 form a coiled coil; sequence KNTIGARLNRVEEKFVHMDQKLNTITDMLHHLVAHQQ.

It belongs to the potassium channel family. KQT (TC 1.A.1.15) subfamily. Kv7.1/KCNQ1 sub-subfamily. Tetramer. Heterotetramer with KCNE1; targets to the membrane raft. Interacts (via C-terminus) with CALM; forms a heterotetramer in a calcium-independent manner. Interacts with KCNE2; form a heterooligomer complex that targets to the membrane raft and leading to currents with an apparently instantaneous activation, a rapid deactivation process and a linear current-voltage relationship and decreases the amplitude of the outward current. Interacts with KCNE3; four KCNE3 molecules are bound to one KCNQ1 tetramer (4:4 KCNQ1:KCNE3 stoichiometry); alters membrane raft localization; affects KCNQ1 structure and gating properties. Interacts with KCNE4; impairs KCNQ1 localization in lipid rafts and inhibits voltage-gated potassium channel activity. Interacts with KCNE5; impairs KCNQ1 localization in lipid rafts and only conducts current upon strong and continued depolarization. In terms of tissue distribution, expressed only in rectal gland and heart. Faintly expressed in intestine. Undetectable in kidney, brain, testis, liver and gills.

It is found in the cell membrane. It localises to the cytoplasmic vesicle membrane. The protein resides in the membrane raft. The protein localises to the endoplasmic reticulum. Its subcellular location is the basolateral cell membrane. It carries out the reaction K(+)(in) = K(+)(out). PIP2 molecule is essential to activate KCNQ channels by inducing the coupling of the voltage-sensing domain (VSD) and the pore-forming domain (PD). Upon channel activation, PIP2 disrupts the VSD-calmodulin/CALM interactions, causing the release of CALM from the VSD which triggers the opening of the gate. Calcium potentiates KCNQ1 channel current through calcium-bound CALM. Calcium-bound CALM competes with PIP2 to stabilize the channel open state. Its function is as follows. Pore-forming subunit of the voltage-gated potassium (Kv) channel involved in the regulation of cardiomyocyte excitability and important in normal development and functions of myocardium, inner ear, stomach and colon. Associates with KCNE beta subunits that modulates current kinetics. Induces a voltage-dependent by rapidly activating and slowly deactivating potassium-selective outward current. Also promotes a delayed voltage activated potassium current showing outward rectification characteristic. During beta-adrenergic receptor stimulation participates in cardiac repolarization by associating with KCNE1 to form the I(Ks) cardiac potassium current that increases the amplitude and slows down the activation kinetics of outward potassium current I(Ks). When associated with KCNE3, forms the potassium channel that is important for cyclic AMP-stimulated intestinal secretion of chloride ions. When associated with KCNE2, forms a heterooligomer complex leading to currents with an apparently instantaneous activation, a rapid deactivation process and a linear current-voltage relationship and decreases the amplitude of the outward current. When associated with KCNE4, inhibits voltage-gated potassium channel activity. When associated with KCNE5, this complex only conducts current upon strong and continued depolarization. The polypeptide is Potassium voltage-gated channel subfamily KQT member 1 (Squalus acanthias (Spiny dogfish)).